Reading from the N-terminus, the 89-residue chain is Small ribosomal subunit protein uS15 (89 aa).

It belongs to the universal ribosomal protein uS15 family. As to quaternary structure, part of the 30S ribosomal subunit. Forms a bridge to the 50S subunit in the 70S ribosome, contacting the 23S rRNA.

In terms of biological role, one of the primary rRNA binding proteins, it binds directly to 16S rRNA where it helps nucleate assembly of the platform of the 30S subunit by binding and bridging several RNA helices of the 16S rRNA. Forms an intersubunit bridge (bridge B4) with the 23S rRNA of the 50S subunit in the ribosome. The sequence is that of Small ribosomal subunit protein uS15 from Pasteurella multocida (strain Pm70).